The primary structure comprises 620 residues: Ferric/cupric reductase transmembrane component 7 (620 aa).

At 1-45 (MIEERDLVLSNGIHCIADIHSELYARLKKESQAATPWVYQKQYGK) the chain is on the extracellular side. The helical transmembrane segment at 46-66 (FVTYFVAVIIFLSLIKKLAFM) threads the bilayer. Over 67 to 107 (YYDSSEEFLPEKKNSPTTPSVFLARIMTKLVAFNRYICYRK) the chain is Cytoplasmic. A helical transmembrane segment spans residues 108–128 (FPTLIFSYLGIPTSVGTFLVV). Topologically, residues 129–167 (MATTLYTLLYCFVPHPFYRPCAGFGSPPLSVRAGIMAIS) are extracellular. Residues 161–320 (AGIMAISLVP…LAVKGYLRPG (160 aa)) enclose the Ferric oxidoreductase domain. The helical transmembrane segment at 168-188 (LVPFVFSLSGKINVIGWLVGL) threads the bilayer. The Cytoplasmic segment spans residues 189 to 194 (SYEKIN). The helical transmembrane segment at 195–215 (IYHQWASILCLFFSWVHVIPF) threads the bilayer. 2 residues coordinate heme: H197 and H211. The Extracellular portion of the chain corresponds to 216–237 (LRQARHEGGYERMHQRWKASDM). A helical transmembrane segment spans residues 238–258 (WRSGVPPILFLNLLWLSSLPI). Over 259-265 (ARRHFYE) the chain is Cytoplasmic. A helical membrane pass occupies residues 266 to 286 (IFLQLHWILAVGFYISLFYHV). 2 residues coordinate heme: H271 and H285. Topologically, residues 287 to 292 (YPELNS) are extracellular. A helical membrane pass occupies residues 293–313 (HMYLVATIVVWFAQLFYRLAV). Over 314-620 (KGYLRPGRSF…CYLHSESFGY (307 aa)) the chain is Cytoplasmic. The 99-residue stretch at 321–419 (RSFMASTIAN…DGPYGGIERD (99 aa)) folds into the FAD-binding FR-type domain. 369–375 (HPFSIFP) serves as a coordination point for FAD. 411–414 (GPYG) is a binding site for NADP(+). The interval 519–543 (SDQSDLAKREKDTEFGQDDTESNST) is disordered. Residues 523-532 (DLAKREKDTE) are compositionally biased toward basic and acidic residues. Position 578 to 579 (578 to 579 (CF)) interacts with NADP(+).

The protein belongs to the ferric reductase (FRE) family. Requires FAD as cofactor.

Its subcellular location is the cell membrane. It carries out the reaction 2 a Fe(II)-siderophore + NADP(+) + H(+) = 2 a Fe(III)-siderophore + NADPH. Its function is as follows. Cell surface metalloreductase. May be involved in copper homeostasis. This is Ferric/cupric reductase transmembrane component 7 (FRE7) from Saccharomyces cerevisiae (strain ATCC 204508 / S288c) (Baker's yeast).